The following is a 160-amino-acid chain: SsrA-binding protein (160 aa).

The interval 136 to 160 (KRDTVRERDSNRELQRAVRNKGKED) is disordered.

It belongs to the SmpB family.

Its subcellular location is the cytoplasm. Its function is as follows. Required for rescue of stalled ribosomes mediated by trans-translation. Binds to transfer-messenger RNA (tmRNA), required for stable association of tmRNA with ribosomes. tmRNA and SmpB together mimic tRNA shape, replacing the anticodon stem-loop with SmpB. tmRNA is encoded by the ssrA gene; the 2 termini fold to resemble tRNA(Ala) and it encodes a 'tag peptide', a short internal open reading frame. During trans-translation Ala-aminoacylated tmRNA acts like a tRNA, entering the A-site of stalled ribosomes, displacing the stalled mRNA. The ribosome then switches to translate the ORF on the tmRNA; the nascent peptide is terminated with the 'tag peptide' encoded by the tmRNA and targeted for degradation. The ribosome is freed to recommence translation, which seems to be the essential function of trans-translation. This Pseudomonas putida (strain W619) protein is SsrA-binding protein.